Reading from the N-terminus, the 85-residue chain is Large ribosomal subunit protein bL31B (85 aa).

It belongs to the bacterial ribosomal protein bL31 family. Type B subfamily. As to quaternary structure, part of the 50S ribosomal subunit.

This is Large ribosomal subunit protein bL31B from Serratia proteamaculans (strain 568).